The primary structure comprises 274 residues: MPELPEVETTKTSLFPLLNQKVLSVEVRNPSLRWPIPDNVQKLVGQRLIGLNRRSKYILAEFEQDQMLWHLGMSGSFRLCQPNDELRKHDHLIIQFEDQQLRYHDPRRFGCILWLNPETQGKLIDTLGPEPLSTDFHAEYLASKLKNKSVGIKIALMDNHVVVGVGNIYATESLFNVGIHPAQPAGDLTMQQIEKLVVEIKRILKSAIDLGGSTLRDYSNAMGENGYFQQTLLAYGRAREMCVNCETTLENLKLGQRASVFCPQCQPLKKLRKP.

The active-site Schiff-base intermediate with DNA is Pro-2. Glu-3 (proton donor) is an active-site residue. Catalysis depends on Lys-56, which acts as the Proton donor; for beta-elimination activity. Residues His-89, Arg-107, and Lys-148 each coordinate DNA. The segment at 233 to 267 (LAYGRAREMCVNCETTLENLKLGQRASVFCPQCQP) adopts an FPG-type zinc-finger fold. The active-site Proton donor; for delta-elimination activity is the Arg-257.

It belongs to the FPG family. Monomer. It depends on Zn(2+) as a cofactor.

It catalyses the reaction Hydrolysis of DNA containing ring-opened 7-methylguanine residues, releasing 2,6-diamino-4-hydroxy-5-(N-methyl)formamidopyrimidine.. The catalysed reaction is 2'-deoxyribonucleotide-(2'-deoxyribose 5'-phosphate)-2'-deoxyribonucleotide-DNA = a 3'-end 2'-deoxyribonucleotide-(2,3-dehydro-2,3-deoxyribose 5'-phosphate)-DNA + a 5'-end 5'-phospho-2'-deoxyribonucleoside-DNA + H(+). Its function is as follows. Involved in base excision repair of DNA damaged by oxidation or by mutagenic agents. Acts as a DNA glycosylase that recognizes and removes damaged bases. Has a preference for oxidized purines, such as 7,8-dihydro-8-oxoguanine (8-oxoG). Has AP (apurinic/apyrimidinic) lyase activity and introduces nicks in the DNA strand. Cleaves the DNA backbone by beta-delta elimination to generate a single-strand break at the site of the removed base with both 3'- and 5'-phosphates. The chain is Formamidopyrimidine-DNA glycosylase from Acinetobacter baumannii (strain SDF).